Reading from the N-terminus, the 708-residue chain is Glutamate--tRNA ligase, cytoplasmic (708 aa).

Interaction with ARC1 regions lie at residues 106-115 (NLRTFILGGL) and 141-157 (KVDV…EMDP). L-glutamate is bound at residue 205-207 (RFP). Residues 210-219 (PSGYLHIGHA) carry the 'HIGH' region motif. Histidine 215 contacts ATP. L-glutamate is bound at residue aspartate 241. At threonine 300 the chain carries Phosphothreonine. L-glutamate is bound by residues 382 to 386 (YDFCV) and arginine 400. Residues glutamate 403 and 437–441 (LLSKR) contribute to the ATP site. The 'KMSKS' region motif lies at 437-441 (LLSKR).

The protein belongs to the class-I aminoacyl-tRNA synthetase family. Glutamate--tRNA ligase type 2 subfamily. In terms of assembly, component of a yeast aminoacyl-tRNA synthase (aaRS) complex formed by methionyl-tRNA synthase MES1, glutamyl-tRNA synthase GUS1 and the tRNA aminoacylation cofactor ARC1 in a stoichiometric complex. Interacts (via N-ter) with ARC1 (via N-ter). Can also form a stable binary complex with ARC1 that is functional in terms of aminoacylation. ARC1 increases the affinity for cognate tRNAs due to the presence of a tRNA binding domain in the middle and C-terminal part of ARC1.

The protein resides in the cytoplasm. It localises to the mitochondrion. It carries out the reaction tRNA(Glu) + L-glutamate + ATP = L-glutamyl-tRNA(Glu) + AMP + diphosphate. In terms of biological role, catalyzes the attachment of glutamate to tRNA(Glu) in a two-step reaction: glutamate is first activated by ATP to form Glu-AMP and then transferred to the acceptor end of tRNA(Glu). In mitochondria, constitutes the nondiscriminating glutamyl-tRNA synthase that generates the mitochondrial mischarged glutamyl-tRNA(Gln) substrate for the tRNA-dependent amidotransferase (AdT), which generates mitochondrial glutaminyl-tRNA(Gln) by transamidation of glutamyl-tRNA(Gln). The polypeptide is Glutamate--tRNA ligase, cytoplasmic (GUS1) (Saccharomyces cerevisiae (strain ATCC 204508 / S288c) (Baker's yeast)).